The primary structure comprises 457 residues: Glutamate--tRNA ligase 2 (457 aa).

A 'HIGH' region motif is present at residues 9 to 19; it reads PSPTGYIHIGN. A 'KMSKS' region motif is present at residues 250 to 254; it reads GLSKR. Residue lysine 253 participates in ATP binding.

This sequence belongs to the class-I aminoacyl-tRNA synthetase family. Glutamate--tRNA ligase type 1 subfamily. Monomer.

It is found in the cytoplasm. The enzyme catalyses tRNA(Glu) + L-glutamate + ATP = L-glutamyl-tRNA(Glu) + AMP + diphosphate. In terms of biological role, catalyzes the attachment of glutamate to tRNA(Glu) in a two-step reaction: glutamate is first activated by ATP to form Glu-AMP and then transferred to the acceptor end of tRNA(Glu). The sequence is that of Glutamate--tRNA ligase 2 from Brucella melitensis biotype 1 (strain ATCC 23456 / CCUG 17765 / NCTC 10094 / 16M).